A 114-amino-acid polypeptide reads, in one-letter code: Cyclin-dependent kinase 2-associated protein 1 (114 aa).

The tract at residues 18 to 57 (AGSVHSPSTSMATSSQYRQLLSDYGPPSLGYTQGTGNSQV) is disordered. The interval 19–24 (GSVHSP) is interaction with CDK2AP2. Residues 20–36 (SVHSPSTSMATSSQYRQ) are compositionally biased toward polar residues. A Phosphoserine; by IKKE modification is found at S45. The segment covering 47–57 (GYTQGTGNSQV) has biased composition (polar residues).

This sequence belongs to the CDK2AP family. In terms of assembly, homodimer. Component of the nucleosome remodeling and deacetylase (NuRD) repressor complex, composed of core proteins MTA1, MTA2, MTA3, RBBP4, RBBP7, HDAC1, HDAC2, MBD2, MBD3, and peripherally associated proteins CDK2AP1, CDK2AP2, GATAD2A, GATAD2B, CHD3, CHD4 and CHD5. The exact stoichiometry of the NuRD complex is unknown, and some subunits such as MBD2 and MBD3, GATAD2A and GATAD2B, and CHD3, CHD4 and CHD5 define mutually exclusive NuRD complexes. Interacts with monomeric unphosphorylated CDK2. Interacts with CDK2AP2. Interacts with GATAD2A. Interacts with HDAC1. Interacts with HDAC2. Interacts with MBD2. Interacts with MBD3. Interacts with RBBP4. Interacts with RBBP7. Post-translationally, phosphorylated in vitro by IKBKE at Ser-45.

The protein localises to the nucleus. Its subcellular location is the chromosome. In terms of biological role, inhibitor of cyclin-dependent kinase CDK2. Also acts as a component of the histone deacetylase NuRD complex which participates in the remodeling of chromatin. The chain is Cyclin-dependent kinase 2-associated protein 1 (Cdk2ap1) from Mus musculus (Mouse).